Consider the following 700-residue polypeptide: MSADKFYIEKELSWLSFNERVLQEAADKTVPLIERIRFLGIFSNNLDEFYKVRFSDVKRRILINREQGGNDISKHLLSKMQSKALKLNERFDELYNELIRDMARRHIFLVNESQLDEAQQKWIIKYFQKEVLPHITPLMLTDEIDVLQFLKDEYAYIAVELKQQEQAKYALLEIPTDHLPRFIMVPEQKGKRKKTIILLDNIIRFCLNDIFRGFFDYDELNGYAMKMTRDAEYDLRHEVEYSLLEQMSEGLSQRLTALPVRFVYERDMPEDMLKYLCYKLKISHYDSLIPGGRYHNFKDFIAFPNVGRDYLENKPLPPLACADFEGYANAFDAIRNQDILLHYPYHSFEHITELVRQASFDPKVVSIKINVYRVAKNSRLMNSLIDAVHNGKRVTVVVELQARFDEEANIEWSKLLTDAGVHVIFGVPGMKIHAKLLLITRREEQGFVRYAHIGTGNFHERTARIYTDFSLLTADQELAAEVRGVFSYIMNPFRPIKFRHLIVSPRNSRSQLYRLLDREIHNAQAGKKASITLKVNNLVDKGLISKLYAASSAGVKIRMIIRGMCSLVPGLEGISENIEIISIIDRFLEHPRVLVVHNDGDPQVFISSADWMERNIDNRIEVMSPVRDARIKQRIIDILSIQFTDTVKARRIDKEMSNNYVERGNRKKIRSQIAIYDYLKNVEKHTRKQKGQVEPNDNNQ.

N45 is an ATP binding site. Mg(2+) contacts are provided by R373 and R403. The region spanning 428–462 (PGMKIHAKLLLITRREEQGFVRYAHIGTGNFHERT) is the PLD phosphodiesterase 1 domain. H433 (phosphohistidine intermediate) is an active-site residue. The ATP site is built by Y466, R562, and H590. Residues 585-615 (DRFLEHPRVLVVHNDGDPQVFISSADWMERN) enclose the PLD phosphodiesterase 2 domain.

This sequence belongs to the polyphosphate kinase 1 (PPK1) family. Mg(2+) is required as a cofactor. Post-translationally, an intermediate of this reaction is the autophosphorylated ppk in which a phosphate is covalently linked to a histidine residue through a N-P bond.

The catalysed reaction is [phosphate](n) + ATP = [phosphate](n+1) + ADP. Its function is as follows. Catalyzes the reversible transfer of the terminal phosphate of ATP to form a long-chain polyphosphate (polyP). The polypeptide is Polyphosphate kinase (Vibrio vulnificus (strain CMCP6)).